Here is a 330-residue protein sequence, read N- to C-terminus: Beta-ketoacyl-[acyl-carrier-protein] synthase III (330 aa).

Residues cysteine 114 and histidine 254 contribute to the active site. Residues 255–259 (QANLR) are ACP-binding. Asparagine 284 is an active-site residue.

Belongs to the thiolase-like superfamily. FabH family. In terms of assembly, homodimer.

Its subcellular location is the cytoplasm. The catalysed reaction is malonyl-[ACP] + acetyl-CoA + H(+) = 3-oxobutanoyl-[ACP] + CO2 + CoA. It participates in lipid metabolism; fatty acid biosynthesis. In terms of biological role, catalyzes the condensation reaction of fatty acid synthesis by the addition to an acyl acceptor of two carbons from malonyl-ACP. Catalyzes the first condensation reaction which initiates fatty acid synthesis and may therefore play a role in governing the total rate of fatty acid production. Possesses both acetoacetyl-ACP synthase and acetyl transacylase activities. Its substrate specificity determines the biosynthesis of branched-chain and/or straight-chain of fatty acids. This chain is Beta-ketoacyl-[acyl-carrier-protein] synthase III, found in Roseiflexus castenholzii (strain DSM 13941 / HLO8).